A 541-amino-acid polypeptide reads, in one-letter code: MFGGYETIEAFEDDLYRDDSSSELSVDSEVEFQLYSQVHYAQSIHNANKEEGYEEKNCENSETVSSQPNQKNLIVLSDSEVIQLSDTSEVITLSDEDSIYRCKRKNIEVQAEEKTQSPATSHSNKVAQKCKRNNKKPKPEERPGVIREVMIIEVSSNEEEESTTSENENVESWMLLGSEEDGKDNDILLNLVGCETAGAEDDVNWFISDKDIEAKIDNNRSSGRWNNRYYSVNKNVTCRNCDKRGHLSKNCPLPQKVRACCLCSERGHLQYGCPARYCLDCSLPMSSNHRCFERLSWRKRCDRCDMIGHHADACPEIWRQYHLTTKPGPPKKPKTPSGQSALVYCYNCAQKGHYGHECTERRMFNQTFPTSPFIYCYDGKYDIQQRDRRIKRKVKDLKKNGDFPRQFKRPHVEETDKRRHHDMRKSRSPRKYRRWPRENKETQKEKTRSREGKTHRRGHQPRGEDEDFPRGSKPNASGCANNQKPSKSLHHASHYHRLREERLLRESKRSKPKKRKSTEDGSHDDLFLIKQKKKKPKPSGL.

The tract at residues 111–144 (AEEKTQSPATSHSNKVAQKCKRNNKKPKPEERPG) is disordered. The segment covering 116-126 (QSPATSHSNKV) has biased composition (polar residues). Residues Lys129, Lys136, Lys138, Lys234, and Lys249 each participate in a glycyl lysine isopeptide (Lys-Gly) (interchain with G-Cter in SUMO2) cross-link. 3 consecutive CCHC-type zinc fingers follow at residues 236–253 (VTCRNCDKRGHLSKNCPL), 258–275 (RACCLCSERGHLQYGCPA), and 299–316 (KRCDRCDMIGHHADACPE). A Glycyl lysine isopeptide (Lys-Gly) (interchain with G-Cter in SUMO2) cross-link involves residue Lys334. The segment at 343–360 (VYCYNCAQKGHYGHECTE) adopts a CCHC-type 4 zinc-finger fold. Residues 394 to 541 (VKDLKKNGDF…KKKKPKPSGL (148 aa)) are disordered. Glycyl lysine isopeptide (Lys-Gly) (interchain with G-Cter in SUMO2) cross-links involve residues Lys408 and Lys431. A compositionally biased stretch (basic residues) spans 418-434 (RRHHDMRKSRSPRKYRR). Residues 435 to 452 (WPRENKETQKEKTRSREG) show a composition bias toward basic and acidic residues. Residue Lys473 forms a Glycyl lysine isopeptide (Lys-Gly) (interchain with G-Cter in SUMO2) linkage. The span at 474–486 (PNASGCANNQKPS) shows a compositional bias: polar residues. Ser477 is subject to Phosphoserine. Residues Lys484 and Lys487 each participate in a glycyl lysine isopeptide (Lys-Gly) (interchain with G-Cter in SUMO2) cross-link. The span at 487–497 (KSLHHASHYHR) shows a compositional bias: basic residues. Composition is skewed to basic and acidic residues over residues 498-509 (LREERLLRESKR) and 517-527 (STEDGSHDDLF). A Glycyl lysine isopeptide (Lys-Gly) (interchain with G-Cter in SUMO2) cross-link involves residue Lys530. Positions 530–541 (KQKKKKPKPSGL) are enriched in basic residues.

In terms of assembly, component of a nucleolar TRAMP-like complex, an ATP-dependent exosome regulatory complex consisting of a helicase (MTREX), an oligadenylate polymerase (TENT4B or TENT4A), and a substrate specific RNA-binding factor (ZCCHC7 or ZCCHC8). Several TRAMP-like complexes exist with specific compositions and are associated with nuclear, or nucleolar RNA exosomes.

It is found in the nucleus. The protein localises to the nucleolus. In Mus musculus (Mouse), this protein is Zinc finger CCHC domain-containing protein 7 (Zcchc7).